A 474-amino-acid polypeptide reads, in one-letter code: tRNA-2-methylthio-N(6)-dimethylallyladenosine synthase (474 aa).

Residues 3–120 enclose the MTTase N-terminal domain; sequence KKLHIKTWGC…LPEMLNHVQG (118 aa). [4Fe-4S] cluster-binding residues include Cys12, Cys49, Cys83, Cys157, Cys161, and Cys164. Residues 143 to 375 form the Radical SAM core domain; that stretch reads RAEGPTAFVS…QDRINQQVLQ (233 aa). A TRAM domain is found at 378–441; the sequence is RRMLGTVQRI…TNSLRGTVVR (64 aa).

Belongs to the methylthiotransferase family. MiaB subfamily. As to quaternary structure, monomer. The cofactor is [4Fe-4S] cluster.

It localises to the cytoplasm. The catalysed reaction is N(6)-dimethylallyladenosine(37) in tRNA + (sulfur carrier)-SH + AH2 + 2 S-adenosyl-L-methionine = 2-methylsulfanyl-N(6)-dimethylallyladenosine(37) in tRNA + (sulfur carrier)-H + 5'-deoxyadenosine + L-methionine + A + S-adenosyl-L-homocysteine + 2 H(+). Catalyzes the methylthiolation of N6-(dimethylallyl)adenosine (i(6)A), leading to the formation of 2-methylthio-N6-(dimethylallyl)adenosine (ms(2)i(6)A) at position 37 in tRNAs that read codons beginning with uridine. The chain is tRNA-2-methylthio-N(6)-dimethylallyladenosine synthase from Serratia proteamaculans (strain 568).